Here is a 307-residue protein sequence, read N- to C-terminus: 4-hydroxythreonine-4-phosphate dehydrogenase (307 aa).

Positions 126 and 127 each coordinate substrate. Residues His-156, His-195, and His-251 each coordinate a divalent metal cation. Substrate is bound by residues Lys-259, Asn-268, and Arg-277.

It belongs to the PdxA family. Homodimer. Zn(2+) serves as cofactor. Mg(2+) is required as a cofactor. The cofactor is Co(2+).

It localises to the cytoplasm. The catalysed reaction is 4-(phosphooxy)-L-threonine + NAD(+) = 3-amino-2-oxopropyl phosphate + CO2 + NADH. Its pathway is cofactor biosynthesis; pyridoxine 5'-phosphate biosynthesis; pyridoxine 5'-phosphate from D-erythrose 4-phosphate: step 4/5. Its function is as follows. Catalyzes the NAD(P)-dependent oxidation of 4-(phosphooxy)-L-threonine (HTP) into 2-amino-3-oxo-4-(phosphooxy)butyric acid which spontaneously decarboxylates to form 3-amino-2-oxopropyl phosphate (AHAP). This chain is 4-hydroxythreonine-4-phosphate dehydrogenase, found in Helicobacter pylori (strain ATCC 700392 / 26695) (Campylobacter pylori).